Reading from the N-terminus, the 594-residue chain is NADH-quinone oxidoreductase subunit C/D (594 aa).

The NADH dehydrogenase I subunit C stretch occupies residues 1 to 185 (MTTGSALYIP…DPFSLNLAKQ (185 aa)). Positions 209 to 594 (DYMFLNLGPN…IDFVMADVDR (386 aa)) are NADH dehydrogenase I subunit D.

This sequence in the N-terminal section; belongs to the complex I 30 kDa subunit family. The protein in the C-terminal section; belongs to the complex I 49 kDa subunit family. In terms of assembly, NDH-1 is composed of 13 different subunits. Subunits NuoB, CD, E, F, and G constitute the peripheral sector of the complex.

It localises to the cell inner membrane. It catalyses the reaction a quinone + NADH + 5 H(+)(in) = a quinol + NAD(+) + 4 H(+)(out). NDH-1 shuttles electrons from NADH, via FMN and iron-sulfur (Fe-S) centers, to quinones in the respiratory chain. The immediate electron acceptor for the enzyme in this species is believed to be ubiquinone. Couples the redox reaction to proton translocation (for every two electrons transferred, four hydrogen ions are translocated across the cytoplasmic membrane), and thus conserves the redox energy in a proton gradient. The sequence is that of NADH-quinone oxidoreductase subunit C/D from Pseudomonas fluorescens (strain Pf0-1).